Consider the following 64-residue polypeptide: Toxin BmCa-1 (64 aa).

Residues 1–18 (MNTFVVVFLLLTAILCHA) form the signal peptide. Residues 19–27 (EHALDETAR) constitute a propeptide that is removed on maturation. Disulfide bonds link Cys29/Cys43, Cys36/Cys49, and Cys42/Cys58.

The protein belongs to the scorpion calcin-like family. Expressed by the venom gland.

It is found in the secreted. Its function is as follows. May increase intracellular calcium release through the activation of nuclear inositol 1,4,5-trisphosphate receptors (ITPR) of cardiomyocytes, thereby causing an increase in the contraction frequency of these cells. The sequence is that of Toxin BmCa-1 from Olivierus martensii (Manchurian scorpion).